An 852-amino-acid chain; its full sequence is Lon protease homolog 2, peroxisomal (852 aa).

S2 carries the post-translational modification N-acetylserine. One can recognise a Lon N-terminal domain in the interval 13 to 222 (LPLLLTHESV…MTIPLLVRQI (210 aa)). An ATP-binding site is contributed by 375-382 (GPPGVGKT). A Lon proteolytic domain is found at 651–837 (LSQPGVAIGL…DEVLNAAFDG (187 aa)). Catalysis depends on residues S743 and K786. Residues 850 to 852 (SKL) carry the Microbody targeting signal motif.

This sequence belongs to the peptidase S16 family. In terms of assembly, interacts with PEX5. Interacts with TYSND1. May interact with enzymes involved in beta-oxidation of fatty acids, including ACOX1/AOX.

The protein localises to the peroxisome matrix. The enzyme catalyses Hydrolysis of proteins in presence of ATP.. Functionally, ATP-dependent serine protease that mediates the selective degradation of misfolded and unassembled polypeptides in the peroxisomal matrix. Necessary for type 2 peroxisome targeting signal (PTS2)-containing protein processing and facilitates peroxisome matrix protein import. May indirectly regulate peroxisomal fatty acid beta-oxidation through degradation of the self-processed forms of TYSND1. This is Lon protease homolog 2, peroxisomal (Lonp2) from Rattus norvegicus (Rat).